The sequence spans 942 residues: MQNKIIIHGARAHNLKNIDVEIPRDKLVIVTGLSGSGKSSLAFDTIYAEGQRRYVESLSAYARQFLGNMEKPDVDSIDGLSPAISIDQKTTSKNPRSTVGTVTEINDYLRLLYARVGTPYCINGHGAITASSAEQIVEQVLALPERTRMQILAPIVRRKKGQHKTIFEKIQKDGYVRVRVDGDIFDVTEVPELSKSKMHNIEVVIDRLVNKDGIRSRLFDSVEAALRLGDGYLMIDTMDGNELLFSEHYSCPVCGFTVPELEPRLFSFNAPFGSCPTCDGLGIKLEVDLDLVVPDPSKSLKEGALAPWNPISSNYYPTMLEQAMASFGVDMDTPFEALTEEERDLVLYGSGDREFHFHYVNDFGGERNIDIPFEGVVTNVNRRYHETNSDYTRNVMRGYMNELTCATCHGYRLNDQALCVHVGGEEGPHIGQISELSIADHLQLLEELELTENESTIAKPIVKEIHDRLTFLNNVGLNYLTLSRAAGTLSGGESQRIRLATQIGSNLSGVLYILDEPSIGLHQRDNDRLIESLKKMRDLGNTLIVVEHDEDTMMQADWLIDVGPGAGEFGGEIIASGTPKQVAKNKKSITGQYLSGKKFIPVPLERRSGNGRFIEIKGAAQNNLQSLDVRFPLGKFIAVTGVSGSGKSTLVNSILKKAVAQKLNRNADKPGKYHSISGIEHIERLIDIDQSPIGRTPRSNPATYTGVFDDIRDLFAQTNEAKIRGYKKGRFSFNVKGGRCEACSGDGIIKIEMHFLPDVYVPCEVCHGRRYNSETLEVHYKEKNIAEVLDMTVDDALVFFSAIPKIARKIQTIKDVGLGYVTLGQPATTLSGGEAQRMKLASELHKRSTGKSLYILDEPTTGLHTDDIARLLKVLERFVDDGNTVLVIEHNLDVIKSADHIIDLGPEGGVGGGQIVATGTPEEVAQVKESYTGHYLKVKLQQ.

ATP is bound at residue Gly32–Ser39. The segment at Cys251–Cys278 adopts a C4-type zinc-finger fold. ABC transporter domains are found at residues Trp308 to Ile589 and Gly609 to Lys937. Position 641–648 (Gly641–Ser648) interacts with ATP. Residues Cys740 to Cys766 form a C4-type zinc finger.

The protein belongs to the ABC transporter superfamily. UvrA family. As to quaternary structure, forms a heterotetramer with UvrB during the search for lesions.

It localises to the cytoplasm. Its function is as follows. The UvrABC repair system catalyzes the recognition and processing of DNA lesions. UvrA is an ATPase and a DNA-binding protein. A damage recognition complex composed of 2 UvrA and 2 UvrB subunits scans DNA for abnormalities. When the presence of a lesion has been verified by UvrB, the UvrA molecules dissociate. The polypeptide is UvrABC system protein A (Streptococcus pyogenes serotype M18 (strain MGAS8232)).